A 1470-amino-acid chain; its full sequence is Collagen alpha-1(XVII) chain (1470 aa).

Disordered regions lie at residues 1 to 155 (MDVT…PSTR), 167 to 193 (KGSR…GTVE), and 422 to 452 (SAEN…GGAS). Residues 1-476 (MDVTKKSKRD…CGSCCSWWKW (476 aa)) are Cytoplasmic-facing. The interval 1–573 (MDVTKKSKRD…MTEQENGNLR (573 aa)) is nonhelical region (NC16). Basic and acidic residues predominate over residues 9–19 (RDGTEVTERIV). Positions 60 to 74 (GSSGYINSSGSIRGN) are enriched in low complexity. 3 stretches are compositionally biased toward polar residues: residues 75-96 (ASTS…SPGS), 111-120 (EGSSSGNSSP), and 170-184 (RSAS…SNTL). The segment at 146–231 (RLQSASPSTR…WSSTLPAGSS (86 aa)) is necessary for interaction with DST and for the recruitment of DST to hemidesmosome. Gly residues predominate over residues 430-452 (RGGGGGRGKGGGAGGGGGGGGAS). The helical; Signal-anchor for type II membrane protein transmembrane segment at 477–497 (LLGLLLTWLLLLGLLFGLIAL) threads the bilayer. The Extracellular segment spans residues 498–1470 (AEEVRKLKAR…RRKRSIAIKP (973 aa)). A Phosphoserine; by CK2 modification is found at Ser551. Disordered stretches follow at residues 568–873 (ENGN…FLSS), 885–999 (GVDL…SSSG), 1159–1181 (DYRN…NAWS), 1194–1220 (TAGL…GVSA), and 1249–1298 (FIVG…TNGG). The segment at 574–1456 (GSPGPKGDMG…KGEKGDKGDQ (883 aa)) is triple-helical region. Over residues 597 to 609 (PGIPGPLGHPGPE) the composition is skewed to pro residues. Low complexity-rich tracts occupy residues 742 to 755 (EPGA…AGAD) and 781 to 803 (DPGK…PGRP). The segment covering 827 to 848 (PGPPGPPGAMGPPGPPGTPGPA) has biased composition (pro residues). The span at 850-873 (PAGLPGQQGPRGEPGLAGDSFLSS) shows a compositional bias: low complexity. Pro residues-rich tracts occupy residues 891–914 (PPGP…PRGP), 940–949 (PPGPPGPPGP), 982–992 (PPGPPGPPGPP), 1166–1175 (PPGPPGPPGM), 1201–1215 (PGPP…PRGP), and 1253–1262 (PPGPPGPQGP). Asn1273 carries N-linked (GlcNAc...) asparagine glycosylation. Residues 1275–1290 (SSNSSARRGTSYSSST) show a composition bias toward low complexity. Residue Asn1395 is glycosylated (N-linked (GlcNAc...) asparagine). Positions 1406-1470 (TYGTIPGPPG…RRKRSIAIKP (65 aa)) are disordered. Pro residues predominate over residues 1434 to 1443 (PRGPPGPPGP). The span at 1446-1455 (NKGEKGDKGD) shows a compositional bias: basic and acidic residues. A nonhelical region (NC1) region spans residues 1457–1470 (VYTGRRKRSIAIKP). Positions 1460–1470 (GRRKRSIAIKP) are enriched in basic residues.

As to quaternary structure, homotrimers of alpha 1(XVII)chains. Interacts (via cytoplasmic region) with ITGB4 (via cytoplasmic region). Interacts (via cytoplasmic region) with DST (via N-terminus). Interacts (via N-terminus) with PLEC. Interacts (via cytoplasmic region) with DSP. Post-translationally, the intracellular/endo domain is disulfide-linked. Prolines at the third position of the tripeptide repeating unit (G-X-Y) are hydroxylated in some or all of the chains. In terms of processing, the ectodomain is shedded from the surface of keratinocytes resulting in a 120-kDa soluble form, also named as 120 kDa linear IgA disease antigen homolog. The shedding is mediated by membrane-bound metalloproteases. This cleavage is inhibited by phosphorylation at Ser-551.

It is found in the cell junction. Its subcellular location is the hemidesmosome. The protein resides in the membrane. It localises to the secreted. The protein localises to the extracellular space. It is found in the extracellular matrix. Its subcellular location is the basement membrane. May play a role in the integrity of hemidesmosome and the attachment of basal keratinocytes to the underlying basement membrane. Its function is as follows. The 120 kDa linear IgA disease antigen homolog is an anchoring filament component involved in dermal-epidermal cohesion. This is Collagen alpha-1(XVII) chain (Col17a1) from Mus musculus (Mouse).